The primary structure comprises 358 residues: NADH-quinone oxidoreductase subunit H (358 aa).

8 helical membrane-spanning segments follow: residues isoleucine 20 to isoleucine 40, alanine 95 to isoleucine 115, isoleucine 128 to glycine 148, isoleucine 168 to methionine 188, valine 206 to valine 226, glycine 253 to leucine 273, tryptophan 290 to tyrosine 310, and valine 334 to leucine 354.

Belongs to the complex I subunit 1 family. As to quaternary structure, NDH-1 is composed of 14 different subunits. Subunits NuoA, H, J, K, L, M, N constitute the membrane sector of the complex.

The protein localises to the cell inner membrane. The catalysed reaction is a quinone + NADH + 5 H(+)(in) = a quinol + NAD(+) + 4 H(+)(out). NDH-1 shuttles electrons from NADH, via FMN and iron-sulfur (Fe-S) centers, to quinones in the respiratory chain. The immediate electron acceptor for the enzyme in this species is believed to be ubiquinone. Couples the redox reaction to proton translocation (for every two electrons transferred, four hydrogen ions are translocated across the cytoplasmic membrane), and thus conserves the redox energy in a proton gradient. This subunit may bind ubiquinone. This is NADH-quinone oxidoreductase subunit H from Neisseria meningitidis serogroup A / serotype 4A (strain DSM 15465 / Z2491).